A 306-amino-acid polypeptide reads, in one-letter code: Pantothenate kinase (306 aa).

Residue 91–98 coordinates ATP; sequence GSVAVGKS.

Belongs to the prokaryotic pantothenate kinase family.

It is found in the cytoplasm. The catalysed reaction is (R)-pantothenate + ATP = (R)-4'-phosphopantothenate + ADP + H(+). Its pathway is cofactor biosynthesis; coenzyme A biosynthesis; CoA from (R)-pantothenate: step 1/5. This chain is Pantothenate kinase, found in Streptococcus equi subsp. zooepidemicus (strain MGCS10565).